A 490-amino-acid polypeptide reads, in one-letter code: MKITVEHLPQSTVRLDIAADPEEFDAALERAFRRISQQVQVPGFRPGRAPRALVERRVGRELIVAEAQRELMDRLYREALQQHRLTPVAEPEVEIYQDEPLAFRVEVQVYPQVDLDGYRDIRVEPREVEVTEEEIDQVIEGLRRSRAVWKTPDEPRQPRDGDQVIVDIEAYEGEQPFQEPLRQATFVLGESNLFAEIDQAIRSLRPGESAEFDISFAEEDERVSPELRGKTLHYRVTVHEVKEAELPEVNDEFAQSLGVATLSELRDRVRRDLLREKAQAARAEVLEQAVQRLLEVATVELPPALIERQVAADVERLREQLRQRGSSLEEYLRFQGKTLEEFKEELRPQAEARLRRYLVLEAFAEAEGIAVSEEELVAEIERLALASGSPEQFRAFYSVPSVRSYLADELHERKVSERLLELVTEGRGAVIGEAARVLAGAEPAEGTEPAAEEAVTAPEVVDGETTPASESAESLAVTETGSRADDDQAS.

The region spanning 161–247 (GDQVIVDIEA…VHEVKEAELP (87 aa)) is the PPIase FKBP-type domain. Over residues 441 to 460 (AEPAEGTEPAAEEAVTAPEV) the composition is skewed to low complexity. The tract at residues 441–490 (AEPAEGTEPAAEEAVTAPEVVDGETTPASESAESLAVTETGSRADDDQAS) is disordered. The segment covering 466-481 (TPASESAESLAVTETG) has biased composition (polar residues).

Belongs to the FKBP-type PPIase family. Tig subfamily.

The protein localises to the cytoplasm. It catalyses the reaction [protein]-peptidylproline (omega=180) = [protein]-peptidylproline (omega=0). Functionally, involved in protein export. Acts as a chaperone by maintaining the newly synthesized protein in an open conformation. Functions as a peptidyl-prolyl cis-trans isomerase. This chain is Trigger factor, found in Thermomicrobium roseum (strain ATCC 27502 / DSM 5159 / P-2).